The following is a 558-amino-acid chain: NAD(P)H-quinone oxidoreductase chain 4 (558 aa).

14 helical membrane passes run 25–45 (FPWL…VPFI), 56–76 (WYAL…YLKG), 111–131 (LILL…PVSF), 133–153 (PKLF…VFAV), 157–177 (LLFF…LAIW), 189–209 (FIIY…AMGF), 230–250 (GFQL…LPVV), 264–284 (TAPV…YALL), 298–318 (FAPL…LTSF), 327–347 (IAYS…SFSS), 353–373 (AMLQ…LVGA), 395–417 (IMFA…SGFV), 438–458 (IVIA…LLSM), and 485–505 (IYVI…PRIM).

Belongs to the complex I subunit 4 family.

The protein resides in the cellular thylakoid membrane. The enzyme catalyses a plastoquinone + NADH + (n+1) H(+)(in) = a plastoquinol + NAD(+) + n H(+)(out). It carries out the reaction a plastoquinone + NADPH + (n+1) H(+)(in) = a plastoquinol + NADP(+) + n H(+)(out). In terms of biological role, NDH-1 shuttles electrons from NAD(P)H, via FMN and iron-sulfur (Fe-S) centers, to quinones in the respiratory chain. The immediate electron acceptor for the enzyme in this species is believed to be plastoquinone. Couples the redox reaction to proton translocation (for every two electrons transferred, four hydrogen ions are translocated across the cytoplasmic membrane), and thus conserves the redox energy in a proton gradient. This chain is NAD(P)H-quinone oxidoreductase chain 4, found in Prochlorococcus marinus (strain MIT 9211).